The following is a 138-amino-acid chain: Transcription antitermination protein NusB (138 aa).

This sequence belongs to the NusB family.

Its function is as follows. Involved in transcription antitermination. Required for transcription of ribosomal RNA (rRNA) genes. Binds specifically to the boxA antiterminator sequence of the ribosomal RNA (rrn) operons. The protein is Transcription antitermination protein NusB of Helicobacter pylori (strain P12).